The chain runs to 591 residues: V-type ATP synthase alpha chain (591 aa).

Residue G231–T238 participates in ATP binding.

It belongs to the ATPase alpha/beta chains family.

It carries out the reaction ATP + H2O + 4 H(+)(in) = ADP + phosphate + 5 H(+)(out). Its function is as follows. Produces ATP from ADP in the presence of a proton gradient across the membrane. The V-type alpha chain is a catalytic subunit. The chain is V-type ATP synthase alpha chain from Clostridium novyi (strain NT).